Reading from the N-terminus, the 279-residue chain is Large ribosomal subunit protein uL2 (279 aa).

The segment at Met-223–Lys-279 is disordered. Over residues Met-232–Gly-242 the composition is skewed to gly residues. Residues Leu-259–Lys-279 are compositionally biased toward basic residues.

This sequence belongs to the universal ribosomal protein uL2 family. As to quaternary structure, part of the 50S ribosomal subunit. Forms a bridge to the 30S subunit in the 70S ribosome.

In terms of biological role, one of the primary rRNA binding proteins. Required for association of the 30S and 50S subunits to form the 70S ribosome, for tRNA binding and peptide bond formation. It has been suggested to have peptidyltransferase activity; this is somewhat controversial. Makes several contacts with the 16S rRNA in the 70S ribosome. In Prosthecochloris aestuarii (strain DSM 271 / SK 413), this protein is Large ribosomal subunit protein uL2.